The sequence spans 200 residues: NAD(P)H dehydrogenase (quinone) (200 aa).

The Flavodoxin-like domain occupies 4-191 (VLVLYYSSYG…DIARYQGKHV (188 aa)). FMN contacts are provided by residues 10-15 (SSYGHV) and 79-81 (TRF). Tyr12 is a binding site for NAD(+). Residue Trp99 participates in substrate binding. FMN is bound by residues 114 to 120 (STGTQHG) and His135.

The protein belongs to the WrbA family. FMN is required as a cofactor.

It catalyses the reaction a quinone + NADH + H(+) = a quinol + NAD(+). The catalysed reaction is a quinone + NADPH + H(+) = a quinol + NADP(+). The protein is NAD(P)H dehydrogenase (quinone) of Burkholderia multivorans (strain ATCC 17616 / 249).